A 531-amino-acid chain; its full sequence is Putative F-box protein At2g02890 (531 aa).

Residues 141–188 (RHSSSLTNDLIEEILSRLHSKSVARFRCVSKQCASMFASPYFKKLFQT) form the F-box domain.

The polypeptide is Putative F-box protein At2g02890 (Arabidopsis thaliana (Mouse-ear cress)).